Consider the following 462-residue polypeptide: Glycine--tRNA ligase (462 aa).

Substrate-binding residues include Arg98 and Glu174. Residues 206–208 (RNE), 216–221 (FRTREF), 290–291 (EL), and 334–337 (GADR) each bind ATP. Residue 221-225 (FEQME) coordinates substrate. Residue 330–334 (EPSLG) coordinates substrate.

It belongs to the class-II aminoacyl-tRNA synthetase family. Homodimer.

Its subcellular location is the cytoplasm. It carries out the reaction tRNA(Gly) + glycine + ATP = glycyl-tRNA(Gly) + AMP + diphosphate. Functionally, catalyzes the attachment of glycine to tRNA(Gly). In Lachnospira eligens (strain ATCC 27750 / DSM 3376 / VPI C15-48 / C15-B4) (Eubacterium eligens), this protein is Glycine--tRNA ligase.